Here is a 206-residue protein sequence, read N- to C-terminus: Pyridoxal 5'-phosphate synthase subunit PdxT (206 aa).

An L-glutamine-binding site is contributed by 59–61 (GES). C91 (nucleophile) is an active-site residue. Residues R123 and 151–152 (IR) each bind L-glutamine. Catalysis depends on charge relay system residues H187 and E189.

Belongs to the glutaminase PdxT/SNO family. As to quaternary structure, in the presence of PdxS, forms a dodecamer of heterodimers. Only shows activity in the heterodimer.

It catalyses the reaction aldehydo-D-ribose 5-phosphate + D-glyceraldehyde 3-phosphate + L-glutamine = pyridoxal 5'-phosphate + L-glutamate + phosphate + 3 H2O + H(+). The enzyme catalyses L-glutamine + H2O = L-glutamate + NH4(+). The protein operates within cofactor biosynthesis; pyridoxal 5'-phosphate biosynthesis. Its function is as follows. Catalyzes the hydrolysis of glutamine to glutamate and ammonia as part of the biosynthesis of pyridoxal 5'-phosphate. The resulting ammonia molecule is channeled to the active site of PdxS. In Mycobacterium sp. (strain KMS), this protein is Pyridoxal 5'-phosphate synthase subunit PdxT.